A 302-amino-acid polypeptide reads, in one-letter code: Ribosomal protein L11 methyltransferase (302 aa).

Thr-148, Gly-169, Asp-191, and Asn-237 together coordinate S-adenosyl-L-methionine.

The protein belongs to the methyltransferase superfamily. PrmA family.

Its subcellular location is the cytoplasm. It carries out the reaction L-lysyl-[protein] + 3 S-adenosyl-L-methionine = N(6),N(6),N(6)-trimethyl-L-lysyl-[protein] + 3 S-adenosyl-L-homocysteine + 3 H(+). Methylates ribosomal protein L11. In Desulfosudis oleivorans (strain DSM 6200 / JCM 39069 / Hxd3) (Desulfococcus oleovorans), this protein is Ribosomal protein L11 methyltransferase.